The sequence spans 112 residues: Nitrogen regulatory protein P-II (112 aa).

Tyrosine 51 bears the O-UMP-tyrosine mark.

The protein belongs to the P(II) protein family. As to quaternary structure, homotrimer.

Functionally, in nitrogen-limiting conditions, when the ratio of Gln to 2-ketoglutarate decreases, P-II is uridylylated to P-II-UMP. P-II-UMP allows the deadenylation of glutamine synthetase (GS), thus activating the enzyme. Conversely, in nitrogen excess P-II is deuridylated and promotes the adenylation of GS. P-II indirectly controls the transcription of the GS gene (glnA). P-II prevents NR-II-catalyzed conversion of NR-I to NR-I-phosphate, the transcriptional activator of glnA. When P-II is uridylylated to P-II-UMP, these events are reversed. The sequence is that of Nitrogen regulatory protein P-II (glnB) from Klebsiella oxytoca.